A 353-amino-acid chain; its full sequence is Major outer membrane protein (353 aa).

An N-terminal signal peptide occupies residues 1–20 (MKKTIVALAVAAVAATSANA).

In terms of assembly, disulfide bond interactions within and between MOMP molecules and other components form high molecular-weight oligomers.

The protein localises to the cell outer membrane. Its function is as follows. Structural rigidity of the outer membrane of elementary bodies and porin forming, permitting diffusion of solutes through the intracellular reticulate body membrane. The sequence is that of Major outer membrane protein (ompH) from Pasteurella multocida.